Here is a 485-residue protein sequence, read N- to C-terminus: Cys-Gly metallodipeptidase DUG1 (485 aa).

His109 contributes to the Zn(2+) binding site. Asp111 is a catalytic residue. Residue Asp144 participates in Zn(2+) binding. Catalysis depends on Glu178, which acts as the Proton acceptor. Positions 179, 207, and 457 each coordinate Zn(2+).

The protein belongs to the peptidase M20A family. Homodimer. Component of the GSH degradosomal complex. Requires Zn(2+) as cofactor. It depends on Mn(2+) as a cofactor.

Its subcellular location is the cytoplasm. In terms of biological role, catalytic component of the GSH degradosomal complex involved in the degradation of glutathione (GSH) and other peptides containing a gamma-glu-X bond. Also functions as a dipeptidase with high specificity for Cys-Gly and no activity toward tri- or tetrapeptides. In Candida albicans (strain SC5314 / ATCC MYA-2876) (Yeast), this protein is Cys-Gly metallodipeptidase DUG1 (DUG1).